A 405-amino-acid polypeptide reads, in one-letter code: uncharacterized protein (405 aa).

The Cytoplasmic segment spans residues 1 to 18 (MPEPVAEPALNGLRLNLR). A helical membrane pass occupies residues 19–39 (IVSIVMFNFASYLTIGLPLAV). Residues 40 to 46 (LPGYVHD) lie on the Periplasmic side of the membrane. The helical transmembrane segment at 47-67 (VMGFSAFWAGLVISLQYFATL) threads the bilayer. The Cytoplasmic portion of the chain corresponds to 68–84 (LSRPHAGRYADSLGPKK). Residues 85–105 (IVVFGLCGCFLSGLGYLTAGL) form a helical membrane-spanning segment. A topological domain (periplasmic) is located at residue T106. Residues 107–127 (ASLPVISLLLLCLGRVILGIG) form a helical membrane-spanning segment. The Cytoplasmic segment spans residues 128–155 (QSFAGTGSTLWGVGVVGSLHIGRVISWN). Residues 156 to 176 (GIVTYGAMAMGAPLGVVFYHW) form a helical membrane-spanning segment. A topological domain (periplasmic) is located at residue G177. The helical transmembrane segment at 178-198 (GLQALALIIMGVALVAILLAI) threads the bilayer. Topologically, residues 199 to 223 (PRPTVKASKGKPLPFRAVLGRVWLY) are cytoplasmic. A helical transmembrane segment spans residues 224–244 (GMALALASAGFGVIATFITLF). Over 245–251 (YDAKGWD) the chain is Periplasmic. Residues 252-272 (GAAFALTLFSCAFVGTRLLFP) form a helical membrane-spanning segment. Topologically, residues 273-282 (NGINRIGGLN) are cytoplasmic. The chain crosses the membrane as a helical span at residues 283–303 (VAMICFSVEIIGLLLVGVATM). At 304 to 308 (PWMAK) the chain is on the periplasmic side. The helical transmembrane segment at 309–329 (IGVLLAGAGFSLVFPALGVVA) threads the bilayer. Topologically, residues 330-343 (VKAVPQQNQGAALA) are cytoplasmic. The chain crosses the membrane as a helical span at residues 344–364 (TYTVFMDLSLGVTGPLAGLVM). A topological domain (periplasmic) is located at residue S365. A helical membrane pass occupies residues 366–386 (WAGVPVIYLAAAGLVAIALLL). Residues 387-405 (TWRLKKRPPEHVPEAASSS) lie on the Cytoplasmic side of the membrane.

This sequence belongs to the major facilitator superfamily. YhhS family.

The protein resides in the cell inner membrane. Its function is as follows. Confers high-level resistance to glyphosate when overexpressed. Overexpression has no effect on intracellular arabinose concentrations. This is an uncharacterized protein from Escherichia coli (strain K12).